We begin with the raw amino-acid sequence, 719 residues long: Cyclin-dependent kinase 11.1 (719 aa).

Basic and acidic residues-rich tracts occupy residues 1–20 (MSDH…ESHK), 38–48 (KGLESKMRESI), and 78–129 (KAKE…DQKV). Disordered stretches follow at residues 1 to 215 (MSDH…KDDD) and 231 to 315 (EEKE…EMTE). Basic residues predominate over residues 130-140 (HEHRHHHHHRK). The span at 141–163 (HETDGHRTNRSNRDRSSERDSEK) shows a compositional bias: basic and acidic residues. Positions 164–174 (HKRHIDRHKKS) are enriched in basic residues. Basic and acidic residues-rich tracts occupy residues 191 to 215 (HTDV…KDDD) and 264 to 274 (DDTKPKSPGKA). The segment covering 275-285 (EDDDDVIEVLD) has biased composition (acidic residues). A Protein kinase domain is found at 356–647 (YECVNRVDEG…ATQALDHEWF (292 aa)). Residues 362–370 (VDEGTFGVV) and Lys385 each bind ATP. Asp484 acts as the Proton acceptor in catalysis. The interval 657–689 (EEFPTFPAKSEQNKAPPPAKQKQQENRISHVDP) is disordered. Over residues 678 to 689 (KQQENRISHVDP) the composition is skewed to basic and acidic residues.

The protein belongs to the protein kinase superfamily. CMGC Ser/Thr protein kinase family. CDC2/CDKX subfamily. Broadly expressed in somatic and germ line cells (at protein level). Not expressed in sperm (at protein level).

The protein resides in the nucleus. It carries out the reaction L-seryl-[protein] + ATP = O-phospho-L-seryl-[protein] + ADP + H(+). The catalysed reaction is L-threonyl-[protein] + ATP = O-phospho-L-threonyl-[protein] + ADP + H(+). Its function is as follows. Probable cyclin-dependent kinase whose activity is most likely regulated by the cyclin cyl-1/Cylin-L. Important for normal oocyte and sperm development; probably required during multiple stages of gametogenesis. Plays a role in the activation of RAS-ERK signaling in the germ line. Also acts partially redundantly with cdk-11.2 to ensure embryonic viability. This Caenorhabditis elegans protein is Cyclin-dependent kinase 11.1.